The primary structure comprises 524 residues: Cytochrome P450 monooxygenase alt1 (524 aa).

A helical membrane pass occupies residues 24–44 (IANMLSVIAFSICISPIVYFL). Residue Cys469 coordinates heme.

It belongs to the cytochrome P450 family. Heme is required as a cofactor.

The protein resides in the membrane. It participates in secondary metabolite biosynthesis. Its function is as follows. Cytochrome P450 monooxygenase; part of the gene cluster that mediates the biosynthesis of alternapyrone derivatives. Alternapyrone is a decaketide with octa-methylation from methionine on every C2 unit except the third unit. All the domains in the polyketide synthase alt5 are apparently involved in alternapyrone synthesis, that is, the 8 CMeT, 7 KR, 7 DH, and 4 ER reactions in the 9 KS-mediated condensation steps required for alternapyrone synthesis. the alternapyrone produced by alt5 might be intensively modified by cytochrome P450 monooxygenases alt1, alt2 and alt3 and FAD-dependent oxidoreductase alt4 present in the alt gene cluster. The polypeptide is Cytochrome P450 monooxygenase alt1 (Alternaria solani).